Here is a 264-residue protein sequence, read N- to C-terminus: Thymidylate synthase (264 aa).

R21 contacts dUMP. Position 51 (H51) interacts with (6R)-5,10-methylene-5,6,7,8-tetrahydrofolate. R126–R127 is a binding site for dUMP. The Nucleophile role is filled by C146. DUMP is bound by residues R166–D169, N177, and H207–Y209. (6R)-5,10-methylene-5,6,7,8-tetrahydrofolate is bound at residue D169. (6R)-5,10-methylene-5,6,7,8-tetrahydrofolate is bound at residue A263.

The protein belongs to the thymidylate synthase family. Bacterial-type ThyA subfamily. Homodimer.

The protein localises to the cytoplasm. It catalyses the reaction dUMP + (6R)-5,10-methylene-5,6,7,8-tetrahydrofolate = 7,8-dihydrofolate + dTMP. The protein operates within pyrimidine metabolism; dTTP biosynthesis. Functionally, catalyzes the reductive methylation of 2'-deoxyuridine-5'-monophosphate (dUMP) to 2'-deoxythymidine-5'-monophosphate (dTMP) while utilizing 5,10-methylenetetrahydrofolate (mTHF) as the methyl donor and reductant in the reaction, yielding dihydrofolate (DHF) as a by-product. This enzymatic reaction provides an intracellular de novo source of dTMP, an essential precursor for DNA biosynthesis. This Chromobacterium violaceum (strain ATCC 12472 / DSM 30191 / JCM 1249 / CCUG 213 / NBRC 12614 / NCIMB 9131 / NCTC 9757 / MK) protein is Thymidylate synthase.